We begin with the raw amino-acid sequence, 236 residues long: Chaperone protein TorD (236 aa).

Belongs to the TorD/DmsD family. TorD subfamily.

It localises to the cytoplasm. Involved in the biogenesis of TorA. Acts on TorA before the insertion of the molybdenum cofactor and, as a result, probably favors a conformation of the apoenzyme that is competent for acquiring the cofactor. The polypeptide is Chaperone protein TorD (Colwellia psychrerythraea (strain 34H / ATCC BAA-681) (Vibrio psychroerythus)).